Reading from the N-terminus, the 211-residue chain is Uracil phosphoribosyltransferase (211 aa).

5-phospho-alpha-D-ribose 1-diphosphate is bound by residues arginine 79, arginine 104, and 131–139 (DPMLATGGS). Uracil contacts are provided by residues isoleucine 196 and 201 to 203 (GDA). Aspartate 202 contacts 5-phospho-alpha-D-ribose 1-diphosphate.

The protein belongs to the UPRTase family. Mg(2+) serves as cofactor.

It catalyses the reaction UMP + diphosphate = 5-phospho-alpha-D-ribose 1-diphosphate + uracil. The protein operates within pyrimidine metabolism; UMP biosynthesis via salvage pathway; UMP from uracil: step 1/1. Allosterically activated by GTP. In terms of biological role, catalyzes the conversion of uracil and 5-phospho-alpha-D-ribose 1-diphosphate (PRPP) to UMP and diphosphate. The chain is Uracil phosphoribosyltransferase from Limosilactobacillus fermentum (strain NBRC 3956 / LMG 18251) (Lactobacillus fermentum).